Consider the following 312-residue polypeptide: Zinc transporter ZitB (312 aa).

5 helical membrane passes run 21 to 41 (LLFA…GGIL), 48 to 68 (LADA…LLVV), 90 to 110 (AAFV…WEAI), 123 to 143 (LMMV…WILH), and 164 to 184 (LLGS…GWTP).

The protein belongs to the cation diffusion facilitator (CDF) transporter (TC 2.A.4) family. SLC30A subfamily.

The protein resides in the cell inner membrane. In terms of biological role, involved in zinc efflux across the cytoplasmic membrane, thus reducing zinc accumulation in the cytoplasm and rendering bacteria more resistant to zinc. It may contribute to zinc homeostasis at low concentrations of zinc. This Salmonella typhi protein is Zinc transporter ZitB.